The sequence spans 500 residues: Cytochrome P450 71D7 (500 aa).

Cys-441 lines the heme pocket.

This sequence belongs to the cytochrome P450 family. The cofactor is heme.

The sequence is that of Cytochrome P450 71D7 (CYP71D7) from Solanum chacoense (Chaco potato).